Consider the following 427-residue polypeptide: Serine hydroxymethyltransferase (427 aa).

Residues L127 and 131–133 each bind (6S)-5,6,7,8-tetrahydrofolate; that span reads GHL. An N6-(pyridoxal phosphate)lysine modification is found at K236.

The protein belongs to the SHMT family. As to quaternary structure, homodimer. Requires pyridoxal 5'-phosphate as cofactor.

Its subcellular location is the cytoplasm. It catalyses the reaction (6R)-5,10-methylene-5,6,7,8-tetrahydrofolate + glycine + H2O = (6S)-5,6,7,8-tetrahydrofolate + L-serine. It participates in one-carbon metabolism; tetrahydrofolate interconversion. Its pathway is amino-acid biosynthesis; glycine biosynthesis; glycine from L-serine: step 1/1. In terms of biological role, catalyzes the reversible interconversion of serine and glycine with tetrahydrofolate (THF) serving as the one-carbon carrier. This reaction serves as the major source of one-carbon groups required for the biosynthesis of purines, thymidylate, methionine, and other important biomolecules. Also exhibits THF-independent aldolase activity toward beta-hydroxyamino acids, producing glycine and aldehydes, via a retro-aldol mechanism. This is Serine hydroxymethyltransferase from Paramagnetospirillum magneticum (strain ATCC 700264 / AMB-1) (Magnetospirillum magneticum).